A 134-amino-acid chain; its full sequence is Aspartate 1-decarboxylase (134 aa).

Ser25 (schiff-base intermediate with substrate; via pyruvic acid) is an active-site residue. The residue at position 25 (Ser25) is a Pyruvic acid (Ser). Thr57 is a binding site for substrate. Tyr58 acts as the Proton donor in catalysis. Position 73–75 (73–75) interacts with substrate; sequence GAA.

The protein belongs to the PanD family. In terms of assembly, heterooctamer of four alpha and four beta subunits. It depends on pyruvate as a cofactor. In terms of processing, is synthesized initially as an inactive proenzyme, which is activated by self-cleavage at a specific serine bond to produce a beta-subunit with a hydroxyl group at its C-terminus and an alpha-subunit with a pyruvoyl group at its N-terminus.

It localises to the cytoplasm. It carries out the reaction L-aspartate + H(+) = beta-alanine + CO2. It functions in the pathway cofactor biosynthesis; (R)-pantothenate biosynthesis; beta-alanine from L-aspartate: step 1/1. In terms of biological role, catalyzes the pyruvoyl-dependent decarboxylation of aspartate to produce beta-alanine. This is Aspartate 1-decarboxylase from Geobacter sp. (strain M21).